A 114-amino-acid chain; its full sequence is Small ribosomal subunit protein bS6 (114 aa).

The protein belongs to the bacterial ribosomal protein bS6 family.

In terms of biological role, binds together with bS18 to 16S ribosomal RNA. In Hydrogenovibrio crunogenus (strain DSM 25203 / XCL-2) (Thiomicrospira crunogena), this protein is Small ribosomal subunit protein bS6.